A 120-amino-acid polypeptide reads, in one-letter code: Chaperonin GroEL (120 aa).

23–27 (DGTTT) is a binding site for ATP.

Belongs to the chaperonin (HSP60) family. As to quaternary structure, forms a cylinder of 14 subunits composed of two heptameric rings stacked back-to-back. Interacts with the co-chaperonin GroES.

The protein localises to the cytoplasm. It catalyses the reaction ATP + H2O + a folded polypeptide = ADP + phosphate + an unfolded polypeptide.. Its function is as follows. Together with its co-chaperonin GroES, plays an essential role in assisting protein folding. The GroEL-GroES system forms a nano-cage that allows encapsulation of the non-native substrate proteins and provides a physical environment optimized to promote and accelerate protein folding. This is Chaperonin GroEL from Mycolicibacterium vaccae (Mycobacterium vaccae).